A 190-amino-acid polypeptide reads, in one-letter code: MIVIVTGMPGSGKSRIVEEFEKRGFPSVSLGDIVREETVKRGLELTKENVAKVSIRLRQELGQNAVAKLAVGKVRVLLEKSPLVVIDGVRSLDEVGTFRGAFPEEKIIIVAVHTPPRLRFERLKARGRHDDPQTWEDFEERDWKELRFGIGGVIAMADHMLINDGSKEEYEKKVKTLVEKIIRGLNRGGA.

Gly-7–Ser-14 lines the ATP pocket.

Belongs to the UPF0200 family.

This is UPF0200 protein TGAM_0868 from Thermococcus gammatolerans (strain DSM 15229 / JCM 11827 / EJ3).